The primary structure comprises 498 residues: ATP synthase subunit beta, chloroplastic (498 aa).

Residues 1–14 (MRTNPTTSRPGVST) show a composition bias toward polar residues. Residues 1–20 (MRTNPTTSRPGVSTSEEKST) are disordered. 172 to 179 (GGAGVGKT) provides a ligand contact to ATP.

Belongs to the ATPase alpha/beta chains family. As to quaternary structure, F-type ATPases have 2 components, CF(1) - the catalytic core - and CF(0) - the membrane proton channel. CF(1) has five subunits: alpha(3), beta(3), gamma(1), delta(1), epsilon(1). CF(0) has four main subunits: a(1), b(1), b'(1) and c(9-12).

Its subcellular location is the plastid. It localises to the chloroplast thylakoid membrane. It carries out the reaction ATP + H2O + 4 H(+)(in) = ADP + phosphate + 5 H(+)(out). In terms of biological role, produces ATP from ADP in the presence of a proton gradient across the membrane. The catalytic sites are hosted primarily by the beta subunits. This is ATP synthase subunit beta, chloroplastic from Hordeum vulgare (Barley).